The primary structure comprises 333 residues: Tetraacyldisaccharide 4'-kinase (333 aa).

60–67 provides a ligand contact to ATP; the sequence is TVGGTGKT.

Belongs to the LpxK family.

It catalyses the reaction a lipid A disaccharide + ATP = a lipid IVA + ADP + H(+). It participates in glycolipid biosynthesis; lipid IV(A) biosynthesis; lipid IV(A) from (3R)-3-hydroxytetradecanoyl-[acyl-carrier-protein] and UDP-N-acetyl-alpha-D-glucosamine: step 6/6. In terms of biological role, transfers the gamma-phosphate of ATP to the 4'-position of a tetraacyldisaccharide 1-phosphate intermediate (termed DS-1-P) to form tetraacyldisaccharide 1,4'-bis-phosphate (lipid IVA). This Ectopseudomonas mendocina (strain ymp) (Pseudomonas mendocina) protein is Tetraacyldisaccharide 4'-kinase.